The sequence spans 214 residues: Large ribosomal subunit protein uL16 (214 aa).

Arginine 32 is modified (citrulline). A Glycyl lysine isopeptide (Lys-Gly) (interchain with G-Cter in SUMO2) cross-link involves residue lysine 175. A Glycyl lysine isopeptide (Lys-Gly) (interchain with G-Cter in ubiquitin) cross-link involves residue lysine 188.

It belongs to the universal ribosomal protein uL16 family. Component of the large ribosomal subunit. Mature ribosomes consist of a small (40S) and a large (60S) subunit. The 40S subunit contains about 33 different proteins and 1 molecule of RNA (18S). The 60S subunit contains about 49 different proteins and 3 molecules of RNA (28S, 5.8S and 5S). Citrullinated by PADI4. In terms of processing, ufmylated by UFL1.

It is found in the cytoplasm. Its function is as follows. Component of the large ribosomal subunit. Plays a role in the formation of actively translating ribosomes. May play a role in the embryonic brain development. The protein is Large ribosomal subunit protein uL16 of Homo sapiens (Human).